Reading from the N-terminus, the 493-residue chain is Cobyric acid synthase (493 aa).

Residues 252-443 (DLQITVVRLP…LHGLFDNGPW (192 aa)) form the GATase cobBQ-type domain. Cysteine 333 (nucleophile) is an active-site residue. Histidine 435 is an active-site residue.

The protein belongs to the CobB/CobQ family. CobQ subfamily.

It functions in the pathway cofactor biosynthesis; adenosylcobalamin biosynthesis. Catalyzes amidations at positions B, D, E, and G on adenosylcobyrinic A,C-diamide. NH(2) groups are provided by glutamine, and one molecule of ATP is hydrogenolyzed for each amidation. This chain is Cobyric acid synthase, found in Nostoc sp. (strain PCC 7120 / SAG 25.82 / UTEX 2576).